The sequence spans 250 residues: tRNA-specific adenosine deaminase subunit TAD2 (250 aa).

Positions 1–119 (MQHIKHMRTA…ERFGGNGTVL (119 aa)) constitute a CMP/dCMP-type deaminase domain. Histidine 54 provides a ligand contact to Zn(2+). Glutamate 56 functions as the Proton donor in the catalytic mechanism. Positions 88 and 91 each coordinate Zn(2+).

This sequence belongs to the cytidine and deoxycytidylate deaminase family. ADAT2 subfamily. Heterodimer with TAD3. Zn(2+) serves as cofactor.

Its subcellular location is the cytoplasm. The protein localises to the nucleus. The enzyme catalyses adenosine(34) in tRNA + H2O + H(+) = inosine(34) in tRNA + NH4(+). Its function is as follows. Structural subunit of tRNA-specific adenosine deaminase, which deaminates adenosine-34 (the first, also called wobble position of the anticodon) to inosine in many tRNAs. Inosine-34 allows the decoding of 3 different nucleotides at the third position of mRNA codons, as inosine is able to pair with U, C, and A. The polypeptide is tRNA-specific adenosine deaminase subunit TAD2 (TAD2) (Saccharomyces cerevisiae (strain ATCC 204508 / S288c) (Baker's yeast)).